A 159-amino-acid chain; its full sequence is MRGTPAYHAVSGVPCSACTCTQVAVQLALSWRGSMGRLKRCEVRRRPCALWAIVRVARIGALAAMLAVLSFALGCALVYPLWALAVHRPRVFSVLSGLLYGGGAVLWGLRRVCNALSYARVRRAGRRAAAQEPCVLVQAGEVGAMGLSSSAEVRPAQEC.

2 helical membrane-spanning segments follow: residues 59–79 and 91–113; these read IGAL…ALVY and VFSV…RRVC.

Its subcellular location is the cell membrane. This is an uncharacterized protein from Treponema pallidum (strain Nichols).